The chain runs to 457 residues: Serine--tRNA ligase (457 aa).

252–254 lines the L-serine pocket; sequence TAE. ATP is bound by residues 283–285 and V299; that span reads RKE. E306 lines the L-serine pocket. Position 370-373 (370-373) interacts with ATP; that stretch reads EMVS. L-serine is bound at residue T406.

It belongs to the class-II aminoacyl-tRNA synthetase family. Type-1 seryl-tRNA synthetase subfamily. As to quaternary structure, homodimer. The tRNA molecule binds across the dimer.

The protein resides in the cytoplasm. It carries out the reaction tRNA(Ser) + L-serine + ATP = L-seryl-tRNA(Ser) + AMP + diphosphate + H(+). It catalyses the reaction tRNA(Sec) + L-serine + ATP = L-seryl-tRNA(Sec) + AMP + diphosphate + H(+). It functions in the pathway aminoacyl-tRNA biosynthesis; selenocysteinyl-tRNA(Sec) biosynthesis; L-seryl-tRNA(Sec) from L-serine and tRNA(Sec): step 1/1. Functionally, catalyzes the attachment of serine to tRNA(Ser). Is also able to aminoacylate tRNA(Sec) with serine, to form the misacylated tRNA L-seryl-tRNA(Sec), which will be further converted into selenocysteinyl-tRNA(Sec). This Saccharolobus islandicus (strain Y.G.57.14 / Yellowstone #1) (Sulfolobus islandicus) protein is Serine--tRNA ligase.